The sequence spans 708 residues: O-antigen chain terminator bifunctional methyltransferase/kinase WbdD (708 aa).

Residues 1 to 210 (MTKDLNTLVS…VPRPMYLVSN (210 aa)) form a methyltransferase region. S-adenosyl-L-methionine-binding positions include 16–17 (YQ), Arg-36, Gly-61, 82–87 (DFQQEN), 108–111 (GRIE), and Leu-128. A kinase region spans residues 211-459 (HRVLINDFNQ…AKLPSAEQQR (249 aa)). ATP contacts are provided by residues Pro-229, His-237, 241-243 (RRY), Lys-252, Glu-274, 309-311 (EKL), Met-358, and Asp-369. Positions 485 to 594 (AGSEALRGQI…EIEKIHRSRS (110 aa)) form a coiled coil. The segment at 601 to 669 (YRYLGLQIHL…RLYRRMNPLP (69 aa)) is required for membrane-binding. The tract at residues 687–708 (VMHPELLPPEVYEIYLKLTKNK) is required for localizing WbdA to the membrane.

It belongs to the WbdD family. Interacts with WbdA.

Its subcellular location is the cell inner membrane. The catalysed reaction is 3-O-phospho-alpha-D-Man-(1-&gt;2)-alpha-D-Man-(1-&gt;2)-[alpha-D-Man-(1-&gt;3)-alpha-D-Man-(1-&gt;3)-alpha-D-Man-(1-&gt;2)-alpha-D-Man-(1-&gt;2)](n)-alpha-D-Man-(1-&gt;3)-alpha-D-Man-(1-&gt;3)-alpha-D-Man-(1-&gt;3)-alpha-D-GlcNAc-di-trans,octa-cis-undecaprenyl diphosphate + S-adenosyl-L-methionine = 3-O-methylphospho-alpha-D-Man-(1-&gt;2)-alpha-D-Man-(1-&gt;2)-[alpha-D-Man-(1-&gt;3)-alpha-D-Man-(1-&gt;3)-alpha-D-Man-(1-&gt;2)-alpha-D-Man-(1-&gt;2)](n)-alpha-D-Man-(1-&gt;3)-alpha-D-Man-(1-&gt;3)-alpha-D-Man-(1-&gt;3)-alpha-D-GlcNAc-di-trans,octa-cis-undecaprenyl diphosphate + S-adenosyl-L-homocysteine. It catalyses the reaction alpha-D-Man-(1-&gt;2)-alpha-D-Man-(1-&gt;2)-[alpha-D-Man-(1-&gt;3)-alpha-D-Man-(1-&gt;3)-alpha-D-Man-(1-&gt;2)-alpha-D-Man-(1-&gt;2)](n)-alpha-D-Man-(1-&gt;3)-alpha-D-Man-(1-&gt;3)-alpha-D-Man-(1-&gt;3)-alpha-D-GlcNAc-di-trans,octa-cis-undecaprenyl diphosphate + ATP = 3-O-phospho-alpha-D-Man-(1-&gt;2)-alpha-D-Man-(1-&gt;2)-[alpha-D-Man-(1-&gt;3)-alpha-D-Man-(1-&gt;3)-alpha-D-Man-(1-&gt;2)-alpha-D-Man-(1-&gt;2)](n)-alpha-D-Man-(1-&gt;3)-alpha-D-Man-(1-&gt;3)-alpha-D-Man-(1-&gt;3)-alpha-D-GlcNAc-di-trans,octa-cis-undecaprenyl diphosphate + ADP + H(+). Its pathway is bacterial outer membrane biogenesis; LPS O-antigen biosynthesis. In terms of biological role, regulates the length of the LPS O-antigen polysaccharide chain. Stops the polymerization of the chain by phosphorylating and then methylating the phosphate on the terminal sugar. This terminal modification is essential for export of the O-antigen across the inner membrane. WbdD is also required for correct localization of the WbdA mannosyltransferase. This chain is O-antigen chain terminator bifunctional methyltransferase/kinase WbdD, found in Escherichia coli.